The chain runs to 222 residues: 7-cyano-7-deazaguanine synthase (222 aa).

11-21 (FSGGQDSTTCL) contributes to the ATP binding site. 4 residues coordinate Zn(2+): C187, C195, C198, and C201.

The protein belongs to the QueC family. Zn(2+) is required as a cofactor.

It catalyses the reaction 7-carboxy-7-deazaguanine + NH4(+) + ATP = 7-cyano-7-deazaguanine + ADP + phosphate + H2O + H(+). It functions in the pathway purine metabolism; 7-cyano-7-deazaguanine biosynthesis. In terms of biological role, catalyzes the ATP-dependent conversion of 7-carboxy-7-deazaguanine (CDG) to 7-cyano-7-deazaguanine (preQ(0)). The sequence is that of 7-cyano-7-deazaguanine synthase from Actinobacillus pleuropneumoniae serotype 3 (strain JL03).